The chain runs to 572 residues: Probable terpene synthase 13 (572 aa).

3 residues coordinate Mg(2+): aspartate 326, aspartate 330, and glutamate 478. A DDXXD motif motif is present at residues 326–330 (DDIFD).

Belongs to the terpene synthase family. It depends on Mg(2+) as a cofactor.

Functionally, probable sesquiterpene synthase. The sequence is that of Probable terpene synthase 13 (TPS13) from Ricinus communis (Castor bean).